Consider the following 151-residue polypeptide: Type 4 adapter protein IcmW (151 aa).

The T4BSS is a complex nanomachine composed of several subcomplexes. This subunit is part of the Type IV Coupling Complex (T4CC), a subcomplex composed of the DotLMNYZ core and the IcmSW-LvgA adapter subunits, linked by the C-terminal tail of DotL. Interacts with IcmS. IcmS and IcmW form a stable complex. Interaction with IcmS greatly enhances the stability of IcmW. Interacts directly with the type 4 coupling protein DotL. Interacts with LvgA. Interacts with effector proteins.

The protein resides in the cytoplasm. With respect to regulation, interaction with DotL is critical for the export of IcmSW-dependent substrates. Its function is as follows. Component of the Dot/Icm type IVB secretion system (T4BSS), which is used to inject bacterial effector proteins into eukaryotic host cells. Part of a subcomplex which recruits effector proteins and delivers them to the core transmembrane subcomplex. The IcmS/IcmW protein complex plays an important role in protein translocation by interacting with multiple Dot/Icm effector proteins to facilitate their translocation into host cells. Interaction promotes conformational changes in the effector protein, which may facilitate display of a C-terminal translocation signal. May maintain the substrates in a translocation competent form. Required for intracellular growth in host cells, replicative phagosome formation and phagosome trafficking. In Legionella pneumophila subsp. pneumophila (strain Philadelphia 1 / ATCC 33152 / DSM 7513), this protein is Type 4 adapter protein IcmW.